The sequence spans 465 residues: UDP-N-acetylmuramate--L-alanine ligase (465 aa).

Position 114 to 120 (114 to 120 (GTHGKTT)) interacts with ATP.

It belongs to the MurCDEF family.

The protein localises to the cytoplasm. It catalyses the reaction UDP-N-acetyl-alpha-D-muramate + L-alanine + ATP = UDP-N-acetyl-alpha-D-muramoyl-L-alanine + ADP + phosphate + H(+). The protein operates within cell wall biogenesis; peptidoglycan biosynthesis. Its function is as follows. Cell wall formation. The polypeptide is UDP-N-acetylmuramate--L-alanine ligase (Chelativorans sp. (strain BNC1)).